A 385-amino-acid chain; its full sequence is MATYKPLEYLEHLKKIVPDLSDQINNIKDTYENKLWHQLTKQIEMIIISPQLLEKKELFNFYTNFIRDFENKLRPLSLVEICIAVARQFDTDESRKFIETISQKVKKDKSAYILTLSYIANMNLRSGVAEQLQDCKKTLELAKEELQGVTGLDTIVYSSFYRVSTDYHMAKSQASEFYKNALMYLSYCKLETISQEEQASLAYNLCIAALVGENVYGFGDLIANPILKALEGSQHNWLIAFLKAFNIGDIQQFEGLMSQHRDIISTQTAITNNMQKLRQKISILSLLELAFRTPSDKRSISFSKIAQATKLPLGEIEHLLMKSLSLNLIKGSIDQTVEIIHITWVTPRILDLNQINSMNNRIAEWTEKAKTSLRLVEDDTVDLVA.

Residues 176–347 form the PCI domain; that stretch reads EFYKNALMYL…EIIHITWVTP (172 aa).

The protein belongs to the proteasome subunit S11 family.

Acts as a regulatory subunit of the 26S proteasome which is involved in the ATP-dependent degradation of ubiquitinated proteins. The polypeptide is 26S proteasome non-ATPase regulatory subunit 13 (psmD13) (Dictyostelium discoideum (Social amoeba)).